The sequence spans 267 residues: Cell division protein FtsQ (267 aa).

The Cytoplasmic segment spans residues 1–32; that stretch reads MRKKTSSNKKNTAKKNNNISLHRKLGLIYKKT. A helical membrane pass occupies residues 33–53; sequence ILILKIVLIIFICLFAFTKYF. The Periplasmic segment spans residues 54–267; that stretch reads ASLKSYLKTN…DKNKYYIEKY (214 aa). Residues 73–141 enclose the POTRA domain; the sequence is FKLENVIIEG…STIYIKLFER (69 aa).

The protein belongs to the FtsQ/DivIB family. FtsQ subfamily.

It is found in the cell inner membrane. Essential cell division protein. In Rickettsia bellii (strain RML369-C), this protein is Cell division protein FtsQ.